Here is a 134-residue protein sequence, read N- to C-terminus: Biopolymer transport protein exbD2 (134 aa).

Over 1-17 (MRLGRRTSKQEEAQIDL) the chain is Cytoplasmic. A helical membrane pass occupies residues 18-38 (TSMLDIVFIMLIFFIVTSSFV). The Periplasmic portion of the chain corresponds to 39–134 (RESGVEVNRP…KSIALAAEKP (96 aa)).

The protein belongs to the ExbD/TolR family. In terms of assembly, the accessory proteins ExbB and ExbD seem to form a complex with TonB.

The protein resides in the cell inner membrane. Functionally, involved in the TonB-dependent energy-dependent transport of various receptor-bound substrates. This Vibrio cholerae serotype O1 (strain ATCC 39315 / El Tor Inaba N16961) protein is Biopolymer transport protein exbD2 (exbD2).